A 304-amino-acid polypeptide reads, in one-letter code: N-acetylmuramic acid 6-phosphate etherase (304 aa).

The 164-residue stretch at 62-225 (IVQAFQNGGR…TTASMVMIGK (164 aa)) folds into the SIS domain. Glu-90 (proton donor) is an active-site residue. Residue Glu-121 is part of the active site.

The protein belongs to the GCKR-like family. MurNAc-6-P etherase subfamily. Homodimer.

It catalyses the reaction N-acetyl-D-muramate 6-phosphate + H2O = N-acetyl-D-glucosamine 6-phosphate + (R)-lactate. The protein operates within amino-sugar metabolism; 1,6-anhydro-N-acetylmuramate degradation. It functions in the pathway amino-sugar metabolism; N-acetylmuramate degradation. It participates in cell wall biogenesis; peptidoglycan recycling. In terms of biological role, specifically catalyzes the cleavage of the D-lactyl ether substituent of MurNAc 6-phosphate, producing GlcNAc 6-phosphate and D-lactate. Together with AnmK, is also required for the utilization of anhydro-N-acetylmuramic acid (anhMurNAc) either imported from the medium or derived from its own cell wall murein, and thus plays a role in cell wall recycling. The chain is N-acetylmuramic acid 6-phosphate etherase from Actinobacillus pleuropneumoniae serotype 7 (strain AP76).